The following is a 233-amino-acid chain: Leucyl/phenylalanyl-tRNA--protein transferase (233 aa).

This sequence belongs to the L/F-transferase family.

It localises to the cytoplasm. It carries out the reaction N-terminal L-lysyl-[protein] + L-leucyl-tRNA(Leu) = N-terminal L-leucyl-L-lysyl-[protein] + tRNA(Leu) + H(+). The enzyme catalyses N-terminal L-arginyl-[protein] + L-leucyl-tRNA(Leu) = N-terminal L-leucyl-L-arginyl-[protein] + tRNA(Leu) + H(+). It catalyses the reaction L-phenylalanyl-tRNA(Phe) + an N-terminal L-alpha-aminoacyl-[protein] = an N-terminal L-phenylalanyl-L-alpha-aminoacyl-[protein] + tRNA(Phe). Functions in the N-end rule pathway of protein degradation where it conjugates Leu, Phe and, less efficiently, Met from aminoacyl-tRNAs to the N-termini of proteins containing an N-terminal arginine or lysine. The polypeptide is Leucyl/phenylalanyl-tRNA--protein transferase (Anaeromyxobacter dehalogenans (strain 2CP-C)).